Consider the following 378-residue polypeptide: Pyrimidine monooxygenase RutA (378 aa).

FMN is bound by residues 65–66 (IK), asparagine 131, glutamate 140, 156–157 (RY), and serine 206.

The protein belongs to the NtaA/SnaA/DszA monooxygenase family. RutA subfamily.

The enzyme catalyses uracil + FMNH2 + NADH + O2 = (Z)-3-ureidoacrylate + FMN + NAD(+) + H2O + H(+). It carries out the reaction thymine + FMNH2 + NADH + O2 = (Z)-2-methylureidoacrylate + FMN + NAD(+) + H2O + H(+). Catalyzes the pyrimidine ring opening between N-3 and C-4 by an unusual flavin hydroperoxide-catalyzed mechanism, adding oxygen atoms in the process to yield ureidoacrylate peracid, that immediately reacts with FMN forming ureidoacrylate and FMN-N(5)-oxide. The FMN-N(5)-oxide reacts spontaneously with NADH to produce FMN. Requires the flavin reductase RutF to regenerate FMN in vivo. The sequence is that of Pyrimidine monooxygenase RutA from Cronobacter turicensis (strain DSM 18703 / CCUG 55852 / LMG 23827 / z3032).